Reading from the N-terminus, the 216-residue chain is Thiamine-phosphate synthase (216 aa).

4-amino-2-methyl-5-(diphosphooxymethyl)pyrimidine-binding positions include glutamine 39 to lysine 43 and asparagine 71. Mg(2+) is bound by residues aspartate 72 and aspartate 91. Residue serine 109 participates in 4-amino-2-methyl-5-(diphosphooxymethyl)pyrimidine binding. Serine 136–threonine 138 contacts 2-[(2R,5Z)-2-carboxy-4-methylthiazol-5(2H)-ylidene]ethyl phosphate. Lysine 139 contacts 4-amino-2-methyl-5-(diphosphooxymethyl)pyrimidine. 2-[(2R,5Z)-2-carboxy-4-methylthiazol-5(2H)-ylidene]ethyl phosphate contacts are provided by residues glycine 172 and isoleucine 192–threonine 193.

Belongs to the thiamine-phosphate synthase family. It depends on Mg(2+) as a cofactor.

The enzyme catalyses 2-[(2R,5Z)-2-carboxy-4-methylthiazol-5(2H)-ylidene]ethyl phosphate + 4-amino-2-methyl-5-(diphosphooxymethyl)pyrimidine + 2 H(+) = thiamine phosphate + CO2 + diphosphate. The catalysed reaction is 2-(2-carboxy-4-methylthiazol-5-yl)ethyl phosphate + 4-amino-2-methyl-5-(diphosphooxymethyl)pyrimidine + 2 H(+) = thiamine phosphate + CO2 + diphosphate. It carries out the reaction 4-methyl-5-(2-phosphooxyethyl)-thiazole + 4-amino-2-methyl-5-(diphosphooxymethyl)pyrimidine + H(+) = thiamine phosphate + diphosphate. The protein operates within cofactor biosynthesis; thiamine diphosphate biosynthesis; thiamine phosphate from 4-amino-2-methyl-5-diphosphomethylpyrimidine and 4-methyl-5-(2-phosphoethyl)-thiazole: step 1/1. Condenses 4-methyl-5-(beta-hydroxyethyl)thiazole monophosphate (THZ-P) and 2-methyl-4-amino-5-hydroxymethyl pyrimidine pyrophosphate (HMP-PP) to form thiamine monophosphate (TMP). The chain is Thiamine-phosphate synthase from Bordetella avium (strain 197N).